The primary structure comprises 137 residues: Nucleoside diphosphate kinase (137 aa).

Residues K9, F57, R85, T91, R102, and N112 each contribute to the ATP site. Catalysis depends on H115, which acts as the Pros-phosphohistidine intermediate.

Belongs to the NDK family. In terms of assembly, homotetramer. The cofactor is Mg(2+).

Its subcellular location is the cytoplasm. The enzyme catalyses a 2'-deoxyribonucleoside 5'-diphosphate + ATP = a 2'-deoxyribonucleoside 5'-triphosphate + ADP. It carries out the reaction a ribonucleoside 5'-diphosphate + ATP = a ribonucleoside 5'-triphosphate + ADP. Functionally, major role in the synthesis of nucleoside triphosphates other than ATP. The ATP gamma phosphate is transferred to the NDP beta phosphate via a ping-pong mechanism, using a phosphorylated active-site intermediate. This Campylobacter fetus subsp. fetus (strain 82-40) protein is Nucleoside diphosphate kinase.